Reading from the N-terminus, the 267-residue chain is L-aspartate dehydrogenase (267 aa).

NAD(+)-binding residues include Ala-124 and Asn-190. His-220 is a catalytic residue.

The protein belongs to the L-aspartate dehydrogenase family.

The catalysed reaction is L-aspartate + NADP(+) + H2O = oxaloacetate + NH4(+) + NADPH + H(+). It carries out the reaction L-aspartate + NAD(+) + H2O = oxaloacetate + NH4(+) + NADH + H(+). Its pathway is cofactor biosynthesis; NAD(+) biosynthesis; iminoaspartate from L-aspartate (dehydrogenase route): step 1/1. Specifically catalyzes the NAD or NADP-dependent dehydrogenation of L-aspartate to iminoaspartate. The polypeptide is L-aspartate dehydrogenase (Pseudomonas aeruginosa (strain ATCC 15692 / DSM 22644 / CIP 104116 / JCM 14847 / LMG 12228 / 1C / PRS 101 / PAO1)).